The sequence spans 619 residues: Threonine--tRNA ligase (619 aa).

Residues 1–143 (MQLLLIHSDF…SRSIRIGEGE (143 aa)) form an editing domain region. Positions 201–500 (PHVELMRRLE…AANGGLPMLP (300 aa)) are catalytic. Residues C293, H345, and H469 each contribute to the Zn(2+) site.

This sequence belongs to the class-II aminoacyl-tRNA synthetase family. Homodimer. The cofactor is Zn(2+).

It localises to the cytoplasm. It catalyses the reaction tRNA(Thr) + L-threonine + ATP = L-threonyl-tRNA(Thr) + AMP + diphosphate + H(+). In terms of biological role, catalyzes the attachment of threonine to tRNA(Thr) in a two-step reaction: L-threonine is first activated by ATP to form Thr-AMP and then transferred to the acceptor end of tRNA(Thr). Also edits incorrectly charged L-seryl-tRNA(Thr). The protein is Threonine--tRNA ligase of Methanothrix thermoacetophila (strain DSM 6194 / JCM 14653 / NBRC 101360 / PT) (Methanosaeta thermophila).